Consider the following 349-residue polypeptide: UDP-3-O-acylglucosamine N-acyltransferase (349 aa).

His-242 functions as the Proton acceptor in the catalytic mechanism.

Belongs to the transferase hexapeptide repeat family. LpxD subfamily. In terms of assembly, homotrimer.

It catalyses the reaction a UDP-3-O-[(3R)-3-hydroxyacyl]-alpha-D-glucosamine + a (3R)-hydroxyacyl-[ACP] = a UDP-2-N,3-O-bis[(3R)-3-hydroxyacyl]-alpha-D-glucosamine + holo-[ACP] + H(+). Its pathway is bacterial outer membrane biogenesis; LPS lipid A biosynthesis. In terms of biological role, catalyzes the N-acylation of UDP-3-O-acylglucosamine using 3-hydroxyacyl-ACP as the acyl donor. Is involved in the biosynthesis of lipid A, a phosphorylated glycolipid that anchors the lipopolysaccharide to the outer membrane of the cell. In Cytophaga hutchinsonii (strain ATCC 33406 / DSM 1761 / CIP 103989 / NBRC 15051 / NCIMB 9469 / D465), this protein is UDP-3-O-acylglucosamine N-acyltransferase.